We begin with the raw amino-acid sequence, 269 residues long: SF-assemblin (269 aa).

Positions 1–23 (MSISPGRSFSPMRASGLTGITSA) are disordered. The interval 1-24 (MSISPGRSFSPMRASGLTGITSAG) is nonhelical region. The rod stretch occupies residues 25-269 (PTAKLEHVSE…LQEGLKLVST (245 aa)). A coiled-coil region spans residues 98 to 144 (AERSAAQHVDMQNSLKQAVDSLSNRLQDLHSLVREEREQRRNDIEHL).

This sequence belongs to the SF-assemblin family.

It localises to the cytoplasm. The protein resides in the cytoskeleton. In terms of biological role, major component of the striated microtubule-associated fibers (SMAFs; system-I-fibers). The polypeptide is SF-assemblin (Chlamydomonas moewusii (Chlamydomonas eugametos)).